We begin with the raw amino-acid sequence, 208 residues long: MSNPHADRLIAFLISSGIKDQRVLDAMHCLPRESFVSQAMMHQAYDNNALPIGQGQTISQPYIVARMTELLELQRASNVLEIGTGSGYQTAVLAQIVDHVYSVERIKSLQWEAKRRLKQLDIYNVSTKHGDGWLGWETKGPFDAIIVTAAAEVIPQALLSQLKDGGKMVIPVGDAEQQLLRIERKGDEYLSTVVEMVRFVPLVAGDLA.

S59 is an active-site residue.

Belongs to the methyltransferase superfamily. L-isoaspartyl/D-aspartyl protein methyltransferase family.

It is found in the cytoplasm. The catalysed reaction is [protein]-L-isoaspartate + S-adenosyl-L-methionine = [protein]-L-isoaspartate alpha-methyl ester + S-adenosyl-L-homocysteine. Its function is as follows. Catalyzes the methyl esterification of L-isoaspartyl residues in peptides and proteins that result from spontaneous decomposition of normal L-aspartyl and L-asparaginyl residues. It plays a role in the repair and/or degradation of damaged proteins. This is Protein-L-isoaspartate O-methyltransferase from Vibrio parahaemolyticus serotype O3:K6 (strain RIMD 2210633).